The following is a 783-amino-acid chain: FYN-binding protein 1 (783 aa).

2 stretches are compositionally biased toward polar residues: residues 1–18 (MAKY…SVNS) and 25–45 (GPNS…QGNA). Positions 1 to 502 (MAKYNTGGNP…KEKKEQEIKK (502 aa)) are disordered. N6-acetyllysine is present on K3. 2 positions are modified to phosphoserine: S28 and S46. Positions 69 to 79 (SSEEKPDKEPK) are enriched in basic and acidic residues. S225 carries the phosphoserine modification. 2 stretches are compositionally biased toward basic and acidic residues: residues 240–252 (PARE…DHAG) and 278–290 (NGEE…KIDA). A Phosphoserine modification is found at S329. Over residues 345-363 (KPLPPLFTLGPPPPKPNRP) the composition is skewed to pro residues. Residues 348-448 (PPLFTLGPPP…QDGVTHSDGA (101 aa)) are interaction with SKAP1. Over residues 374–387 (TSSGNSTSKGQTSY) the composition is skewed to polar residues. The segment covering 392–424 (LPPPPPSHPASQPPLPASHPSQPPVPSLPPRNI) has biased composition (pro residues). Positions 451–465 (LDEEQDSEGETYEDI) are enriched in acidic residues. Residues 456–507 (DSEGETYEDIEASKEREKKREKEEKKRLELEKKEQKEKEKKEQEIKKKFKLT) adopt a coiled-coil conformation. S457 bears the Phosphoserine mark. The short motif at 462–465 (YEDI) is the SH2-binding element. Basic and acidic residues predominate over residues 466–501 (EASKEREKKREKEEKKRLELEKKEQKEKEKKEQEIK). Positions 469-505 (KEREKKREKEEKKRLELEKKEQKEKEKKEQEIKKKFK) match the Nuclear localization signal motif. The SH3 1 domain occupies 511-572 (QVIHLAKACC…KTTAVEIDYD (62 aa)). Position 571 is a phosphotyrosine (Y571). S573 and S580 each carry phosphoserine. The short motif at 595–598 (YDDV) is the SH2-binding; to LCP2 element. The interval 598 to 678 (VAEQDDISSH…GTNVGKAKTE (81 aa)) is disordered. Composition is skewed to acidic residues over residues 620–635 (PDDD…DADD) and 646–656 (MGDEVYDDVDT). Residues 625–628 (YDGI) carry the SH2-binding; to FYN motif. Phosphotyrosine is present on Y651. Positions 674–700 (KAKTEEKDLKKLKKQEKEEKDFRKKFK) match the Nuclear localization signal motif. Positions 700–768 (KYDGEIRVLY…LRSYLADNDG (69 aa)) constitute an SH3 2 domain.

As to quaternary structure, part of a complex consisting of SKAP2, FYB1 and PTPNS1. Part of a complex consisting of SKAP2, FYB1 and LILRB3. Part of a complex consisting of SKAP1, FYB1 and CLNK. Interacts with CLNK (via its SH2 domain); this interaction allows SKAP1 and FYB1 to recruit FYN to the complex, thus promoting the phosphorylation of CLNK by FYN. Interacts with FYN. Interacts with LCP2. Interacts with SKAP1. Interacts with SKAP2. Interacts with FASLG. Interacts with EVL. Interacts with TMEM47. Interacts with LCK. Post-translationally, T-cell receptor ligation leads to increased tyrosine phosphorylation. In terms of tissue distribution, expressed in hematopoietic tissues such as myeloid and T-cells, spleen and thymus. Not expressed in B-cells, nor in non-lymphoid tissues.

It localises to the cytoplasm. It is found in the nucleus. Its subcellular location is the cell junction. Acts as an adapter protein of the FYN and LCP2 signaling cascades in T-cells. May play a role in linking T-cell signaling to remodeling of the actin cytoskeleton. Modulates the expression of IL2. Involved in platelet activation. Prevents the degradation of SKAP1 and SKAP2. May be involved in high affinity immunoglobulin epsilon receptor signaling in mast cells. The sequence is that of FYN-binding protein 1 from Homo sapiens (Human).